The primary structure comprises 184 residues: Peptide deformylase (184 aa).

Fe cation contacts are provided by C111 and H154. Residue E155 is part of the active site. H158 provides a ligand contact to Fe cation.

The protein belongs to the polypeptide deformylase family. Requires Fe(2+) as cofactor.

It catalyses the reaction N-terminal N-formyl-L-methionyl-[peptide] + H2O = N-terminal L-methionyl-[peptide] + formate. Its function is as follows. Removes the formyl group from the N-terminal Met of newly synthesized proteins. Requires at least a dipeptide for an efficient rate of reaction. N-terminal L-methionine is a prerequisite for activity but the enzyme has broad specificity at other positions. This is Peptide deformylase from Macrococcus caseolyticus (strain JCSC5402) (Macrococcoides caseolyticum).